A 1616-amino-acid chain; its full sequence is Vitellogenin-1 (1616 aa).

Positions 1–19 (MRSIIIASIVALAIAFSPA) are cleaved as a signal peptide. Residues 24 to 689 (FEPKIDYHYK…EKNSFLLKDL (666 aa)) enclose the Vitellogenin domain. Residue N1270 is glycosylated (N-linked (GlcNAc...) asparagine). The VWFD domain maps to 1310–1479 (SVCKVQKNQI…SYLLKNEECE (170 aa)). 2 disulfides stabilise this stretch: C1312/C1442 and C1334/C1478. Over residues 1505 to 1514 (SFEETYDYEQ) the composition is skewed to acidic residues. The segment at 1505–1531 (SFEETYDYEQENTNKKQKNQRSQKKSD) is disordered.

As to expression, expressed in the intestine of adult hermaphrodites.

The protein localises to the secreted. Its function is as follows. Precursor of the egg-yolk proteins that are sources of nutrients during embryonic development. Together with other vitellogenins, may play a role in modulating life-span, acting via induction of autophagy and lysosomal lipolysis. This Caenorhabditis elegans protein is Vitellogenin-1 (vit-1).